The chain runs to 168 residues: Transcriptional repressor NrdR (168 aa).

A zinc finger lies at 3–34; sequence CPYCGFAQDRVVDSRESKEADSIRRRRECERC. Positions 49 to 139 constitute an ATP-cone domain; the sequence is YMVVKKDGRR…VYRDFKDVNE (91 aa).

It belongs to the NrdR family. Zn(2+) is required as a cofactor.

Negatively regulates transcription of bacterial ribonucleotide reductase nrd genes and operons by binding to NrdR-boxes. This is Transcriptional repressor NrdR from Acidobacterium capsulatum (strain ATCC 51196 / DSM 11244 / BCRC 80197 / JCM 7670 / NBRC 15755 / NCIMB 13165 / 161).